A 404-amino-acid chain; its full sequence is Glucosyl-3-phosphoglycerate synthase (404 aa).

A divalent metal cation is bound at residue aspartate 146. 188 to 190 (GRV) provides a ligand contact to (2R)-3-phosphoglycerate. An a divalent metal cation-binding site is contributed by histidine 270.

This sequence belongs to the glycosyltransferase 2 family. Mn(2+) serves as cofactor. Co(2+) is required as a cofactor. Requires Mg(2+) as cofactor.

It catalyses the reaction an NDP-alpha-D-glucose + (2R)-3-phosphoglycerate = (2R)-2-O-(alpha-D-glucopyranosyl)-3-phospho-glycerate + a ribonucleoside 5'-diphosphate + H(+). Involved in the biosynthesis of 6-O-methylglucose lipopolysaccarides (MGLPs). Catalyzes the transfer of a glucose (Glc) moiety from uridine diphosphate (UDP-Glc) to the position 2 of 3-phospho-D-glycerate (3-PGA) to form glucosyl-3-phosphoglycerate (GPG). This chain is Glucosyl-3-phosphoglycerate synthase, found in Methanococcoides burtonii (strain DSM 6242 / NBRC 107633 / OCM 468 / ACE-M).